A 342-amino-acid chain; its full sequence is 3-isopropylmalate dehydrogenase (342 aa).

Substrate is bound by residues arginine 92, arginine 102, arginine 126, and aspartate 216. Aspartate 216, aspartate 240, and aspartate 244 together coordinate Mg(2+). NAD(+) is bound at residue 276-288 (GSAPDIAGKGIAD).

Belongs to the isocitrate and isopropylmalate dehydrogenases family. LeuB type 2 subfamily. Homodimer. Mg(2+) serves as cofactor. Mn(2+) is required as a cofactor.

Its subcellular location is the cytoplasm. It carries out the reaction (2R,3S)-3-isopropylmalate + NAD(+) = 4-methyl-2-oxopentanoate + CO2 + NADH. It functions in the pathway amino-acid biosynthesis; L-leucine biosynthesis; L-leucine from 3-methyl-2-oxobutanoate: step 3/4. Functionally, catalyzes the oxidation of 3-carboxy-2-hydroxy-4-methylpentanoate (3-isopropylmalate) to 3-carboxy-4-methyl-2-oxopentanoate. The product decarboxylates to 4-methyl-2 oxopentanoate. This is 3-isopropylmalate dehydrogenase from Corynebacterium kroppenstedtii (strain DSM 44385 / JCM 11950 / CIP 105744 / CCUG 35717).